The following is a 496-amino-acid chain: Cytochrome P450 71D180 (496 aa).

A helical; Signal-anchor for type II membrane protein membrane pass occupies residues Met1 to Met21. Cys435 lines the heme pocket. A disordered region spans residues Met471–Ser496.

It belongs to the cytochrome P450 family. It depends on heme as a cofactor. Mostly expressed in flowers and stems, and, to a lower extent, in leaves.

The protein resides in the membrane. The enzyme catalyses gamma-terpinene + 2 reduced [NADPH--hemoprotein reductase] + 2 O2 = carvacrol + 2 oxidized [NADPH--hemoprotein reductase] + 3 H2O + 2 H(+). It carries out the reaction (4S)-limonene + reduced [NADPH--hemoprotein reductase] + O2 = (1S,5R)-carveol + oxidized [NADPH--hemoprotein reductase] + H2O + H(+). The catalysed reaction is (4R)-limonene + reduced [NADPH--hemoprotein reductase] + O2 = (1R,5S)-carveol + oxidized [NADPH--hemoprotein reductase] + H2O + H(+). Its pathway is secondary metabolite biosynthesis; terpenoid biosynthesis. Its function is as follows. Involved in the biosynthesis of phenolic monoterpenes natural products thymol and carvacrol which have a broad range of biological activities acting as antimicrobial compounds, insecticides, antioxidants and pharmaceutical agents. Catalyzes the C2-hydroxylation of gamma-terpinene to produce carvacrol. Also mediates the C6-hydroxylation of (4S)-limonene and (4R)-limonene to form carveol. This is Cytochrome P450 71D180 from Origanum vulgare (Wild marjoram).